Reading from the N-terminus, the 331-residue chain is tRNA (guanine-N(7)-)-methyltransferase (331 aa).

Residues Glu29, Glu55, and Asp105 each contribute to the S-adenosyl-L-methionine site. Asp105 is an active-site residue. Residues Lys109 and Asp141 each contribute to the substrate site.

This sequence belongs to the class I-like SAM-binding methyltransferase superfamily. TrmB family.

The enzyme catalyses guanosine(46) in tRNA + S-adenosyl-L-methionine = N(7)-methylguanosine(46) in tRNA + S-adenosyl-L-homocysteine. The protein operates within tRNA modification; N(7)-methylguanine-tRNA biosynthesis. In terms of biological role, catalyzes the formation of N(7)-methylguanine at position 46 (m7G46) in tRNA. In Deinococcus geothermalis (strain DSM 11300 / CIP 105573 / AG-3a), this protein is tRNA (guanine-N(7)-)-methyltransferase.